We begin with the raw amino-acid sequence, 568 residues long: Proline--tRNA ligase (568 aa).

This sequence belongs to the class-II aminoacyl-tRNA synthetase family. ProS type 1 subfamily. In terms of assembly, homodimer.

It localises to the cytoplasm. The enzyme catalyses tRNA(Pro) + L-proline + ATP = L-prolyl-tRNA(Pro) + AMP + diphosphate. Its function is as follows. Catalyzes the attachment of proline to tRNA(Pro) in a two-step reaction: proline is first activated by ATP to form Pro-AMP and then transferred to the acceptor end of tRNA(Pro). As ProRS can inadvertently accommodate and process non-cognate amino acids such as alanine and cysteine, to avoid such errors it has two additional distinct editing activities against alanine. One activity is designated as 'pretransfer' editing and involves the tRNA(Pro)-independent hydrolysis of activated Ala-AMP. The other activity is designated 'posttransfer' editing and involves deacylation of mischarged Ala-tRNA(Pro). The misacylated Cys-tRNA(Pro) is not edited by ProRS. This Listeria monocytogenes serovar 1/2a (strain ATCC BAA-679 / EGD-e) protein is Proline--tRNA ligase.